The chain runs to 650 residues: Chaperone protein HtpG (650 aa).

Residues 1–356 (MSTRVETLEF…THDLSLNISR (356 aa)) form an a; substrate-binding region. Residues 222–245 (AKDRDSNDDGTAESGAGAENAGDR) form a disordered region. Residues 357–572 (EILQQDRRIQ…TFDMTPALEK (216 aa)) form a b region. The segment at 573 to 650 (MYRAMGHEMP…LLAERLAEAL (78 aa)) is c.

The protein belongs to the heat shock protein 90 family. In terms of assembly, homodimer.

The protein resides in the cytoplasm. Functionally, molecular chaperone. Has ATPase activity. The sequence is that of Chaperone protein HtpG from Frankia casuarinae (strain DSM 45818 / CECT 9043 / HFP020203 / CcI3).